The following is a 390-amino-acid chain: 5-hydroxytryptamine receptor 1B (390 aa).

The Extracellular segment spans residues 1–46 (MEEPGAQCAPPPPAGSETWVPQANLSSAPSQNCSAKDYIYQDSISL). Residues N24 and N32 are each glycosylated (N-linked (GlcNAc...) asparagine). The helical transmembrane segment at 47 to 72 (PWKVLLVMLLALITLATTLSNAFVIA) threads the bilayer. The Cytoplasmic segment spans residues 73 to 86 (TVYRTRKLHTPANY). Residues 87–111 (LIASLAVTDLLVSILVMPISTMYTV) form a helical membrane-spanning segment. At 112-119 (TGRWTLGQ) the chain is on the extracellular side. Residues 120–145 (VVCDFWLSSDITCCTASILHLCVIAL) form a helical membrane-spanning segment. An intrachain disulfide couples C122 to C199. 2 residues coordinate ergotamine: D129 and T134. A DRY motif; important for ligand-induced conformation changes and signaling motif is present at residues 146 to 148 (DRY). At 146 to 165 (DRYWAITDAVEYSAKRTPKR) the chain is on the cytoplasmic side. Residues 166–184 (AAVMIALVWVFSISISLPP) form a helical membrane-spanning segment. At 185–205 (FFWRQAKAEEEVSECVVNTDH) the chain is on the extracellular side. V201 contacts ergotamine. Residues 206–229 (ILYTVYSTVGAFYFPTLLLIALYG) form a helical membrane-spanning segment. Topologically, residues 230 to 315 (RIYVEARSRI…AARERKATKT (86 aa)) are cytoplasmic. A compositionally biased stretch (polar residues) spans 259-272 (DSPGSTSSVTSINS). The segment at 259 to 281 (DSPGSTSSVTSINSRVPDVPSES) is disordered. Residues 316-337 (LGIILGAFIVCWLPFFIISLVM) traverse the membrane as a helical segment. Topologically, residues 338–347 (PICKDACWFH) are extracellular. Residues 348–370 (LAIFDFFTWLGYLNSLINPIIYT) form a helical membrane-spanning segment. Positions 365-369 (NPIIY) match the NPxxY motif; important for ligand-induced conformation changes and signaling motif. Residues 371–390 (MSNEDFKQAFHKLIRFKCTS) lie on the Cytoplasmic side of the membrane. A lipid anchor (S-palmitoyl cysteine) is attached at C388.

It belongs to the G-protein coupled receptor 1 family. In terms of assembly, homodimer. Heterodimer with HTR1D. In terms of processing, phosphorylated. Desensitization of the receptor may be mediated by its phosphorylation. Post-translationally, palmitoylated. As to expression, detected in cerebral artery smooth muscle cells (at protein level). Detected in brain cortex, striatum, amygdala, medulla, hippocampus, caudate nucleus and putamen.

The protein resides in the cell membrane. Functionally, G-protein coupled receptor for 5-hydroxytryptamine (serotonin). Also functions as a receptor for ergot alkaloid derivatives, various anxiolytic and antidepressant drugs and other psychoactive substances, such as lysergic acid diethylamide (LSD). Ligand binding causes a conformation change that triggers signaling via guanine nucleotide-binding proteins (G proteins) and modulates the activity of downstream effectors, such as adenylate cyclase. HTR1B is coupled to G(i)/G(o) G alpha proteins and mediates inhibitory neurotransmission by inhibiting adenylate cyclase activity. Arrestin family members inhibit signaling via G proteins and mediate activation of alternative signaling pathways. Regulates the release of 5-hydroxytryptamine, dopamine and acetylcholine in the brain, and thereby affects neural activity, nociceptive processing, pain perception, mood and behavior. Besides, plays a role in vasoconstriction of cerebral arteries. The polypeptide is 5-hydroxytryptamine receptor 1B (Homo sapiens (Human)).